The primary structure comprises 307 residues: Nucleotide-binding protein ACP_0619 (307 aa).

Residues 1–14 (MPAPEPTRRAKKDA) are compositionally biased toward basic and acidic residues. The disordered stretch occupies residues 1 to 23 (MPAPEPTRRAKKDASASPSPAHP). 33 to 40 (GLSGAGKG) lines the ATP pocket. 83–86 (DVRE) provides a ligand contact to GTP.

This sequence belongs to the RapZ-like family.

Functionally, displays ATPase and GTPase activities. This chain is Nucleotide-binding protein ACP_0619, found in Acidobacterium capsulatum (strain ATCC 51196 / DSM 11244 / BCRC 80197 / JCM 7670 / NBRC 15755 / NCIMB 13165 / 161).